The chain runs to 218 residues: Ras-related protein RABE1e (218 aa).

A GTP-binding site is contributed by 22 to 29; that stretch reads GDSGVGKS. Residues 44 to 52 carry the Effector region motif; it reads FITTIGIDF. Residues 70–74, 128–131, and 159–160 contribute to the GTP site; these read DTAGQ, NKAD, and SA. Residues 182–218 are disordered; the sequence is TESDTKAEPQGIKITKQDANKASSSSTNEKSACCSYV. A compositionally biased stretch (polar residues) spans 201-211; that stretch reads NKASSSSTNEK. S-geranylgeranyl cysteine attachment occurs at residues cysteine 214 and cysteine 215.

Belongs to the small GTPase superfamily. Rab family. As to quaternary structure, interacts with PI5K2.

It is found in the golgi apparatus membrane. The protein resides in the cell membrane. Its function is as follows. Involved in membrane trafficking from the Golgi to the plasma membrane. The chain is Ras-related protein RABE1e (RABE1E) from Arabidopsis thaliana (Mouse-ear cress).